The following is a 384-amino-acid chain: Putative glutamate--cysteine ligase 2 (384 aa).

This sequence belongs to the glutamate--cysteine ligase type 2 family. YbdK subfamily.

It catalyses the reaction L-cysteine + L-glutamate + ATP = gamma-L-glutamyl-L-cysteine + ADP + phosphate + H(+). In terms of biological role, ATP-dependent carboxylate-amine ligase which exhibits weak glutamate--cysteine ligase activity. In Dechloromonas aromatica (strain RCB), this protein is Putative glutamate--cysteine ligase 2.